The sequence spans 658 residues: DNA mismatch repair protein MutL (658 aa).

Residues 114–130 are compositionally biased toward basic and acidic residues; it reads RQEDSSHATQVKAEDGK. Disordered stretches follow at residues 114 to 137 and 369 to 391; these read RQED…PTAA and DYPT…TAPM.

The protein belongs to the DNA mismatch repair MutL/HexB family.

Functionally, this protein is involved in the repair of mismatches in DNA. It is required for dam-dependent methyl-directed DNA mismatch repair. May act as a 'molecular matchmaker', a protein that promotes the formation of a stable complex between two or more DNA-binding proteins in an ATP-dependent manner without itself being part of a final effector complex. This Neisseria meningitidis serogroup C (strain 053442) protein is DNA mismatch repair protein MutL.